We begin with the raw amino-acid sequence, 1073 residues long: Carbamoyl phosphate synthase large chain (1073 aa).

The interval 2 to 403 (PKRTDIKSIL…SLQKALRGLE (402 aa)) is carboxyphosphate synthetic domain. ATP contacts are provided by Arg-129, Arg-169, Gly-175, Gly-176, Glu-208, Leu-210, Glu-215, Gly-241, Ile-242, His-243, Gln-285, and Glu-299. In terms of domain architecture, ATP-grasp 1 spans 133–328 (DVAMKKIGLE…IAKVAAKLAV (196 aa)). 3 residues coordinate Mg(2+): Gln-285, Glu-299, and Asn-301. Residues Gln-285, Glu-299, and Asn-301 each contribute to the Mn(2+) site. An oligomerization domain region spans residues 404-553 (VGATGFDPKV…YSTYEEECEA (150 aa)). A carbamoyl phosphate synthetic domain region spans residues 554 to 936 (NPSTDREKIM…AFAKAQLGSN (383 aa)). The ATP-grasp 2 domain occupies 679–870 (QHAVERLKLK…LAKVAARVMA (192 aa)). ATP-binding residues include Arg-715, His-754, Leu-756, Glu-761, Gly-786, Val-787, His-788, Ser-789, Gln-829, and Glu-841. 3 residues coordinate Mg(2+): Gln-829, Glu-841, and Asn-843. Residues Gln-829, Glu-841, and Asn-843 each coordinate Mn(2+). The MGS-like domain maps to 937–1073 (STMKKHGRAL…SVQEMHAQIK (137 aa)). Residues 937–1073 (STMKKHGRAL…SVQEMHAQIK (137 aa)) form an allosteric domain region.

It belongs to the CarB family. Composed of two chains; the small (or glutamine) chain promotes the hydrolysis of glutamine to ammonia, which is used by the large (or ammonia) chain to synthesize carbamoyl phosphate. Tetramer of heterodimers (alpha,beta)4. It depends on Mg(2+) as a cofactor. Mn(2+) is required as a cofactor.

It catalyses the reaction hydrogencarbonate + L-glutamine + 2 ATP + H2O = carbamoyl phosphate + L-glutamate + 2 ADP + phosphate + 2 H(+). The catalysed reaction is hydrogencarbonate + NH4(+) + 2 ATP = carbamoyl phosphate + 2 ADP + phosphate + 2 H(+). The protein operates within amino-acid biosynthesis; L-arginine biosynthesis; carbamoyl phosphate from bicarbonate: step 1/1. It functions in the pathway pyrimidine metabolism; UMP biosynthesis via de novo pathway; (S)-dihydroorotate from bicarbonate: step 1/3. Large subunit of the glutamine-dependent carbamoyl phosphate synthetase (CPSase). CPSase catalyzes the formation of carbamoyl phosphate from the ammonia moiety of glutamine, carbonate, and phosphate donated by ATP, constituting the first step of 2 biosynthetic pathways, one leading to arginine and/or urea and the other to pyrimidine nucleotides. The large subunit (synthetase) binds the substrates ammonia (free or transferred from glutamine from the small subunit), hydrogencarbonate and ATP and carries out an ATP-coupled ligase reaction, activating hydrogencarbonate by forming carboxy phosphate which reacts with ammonia to form carbamoyl phosphate. The sequence is that of Carbamoyl phosphate synthase large chain from Escherichia coli O6:H1 (strain CFT073 / ATCC 700928 / UPEC).